The following is a 72-amino-acid chain: MSNDDSIEFEGSVSETLPNTTFRVKLENGYEIIAHISGRMRKNYIRILTGDRVKVEMTPYDLTKGRITYRMK.

In terms of domain architecture, S1-like spans 1–72 (MSNDDSIEFE…TKGRITYRMK (72 aa)).

This sequence belongs to the IF-1 family. In terms of assembly, component of the 30S ribosomal translation pre-initiation complex which assembles on the 30S ribosome in the order IF-2 and IF-3, IF-1 and N-formylmethionyl-tRNA(fMet); mRNA recruitment can occur at any time during PIC assembly.

It is found in the cytoplasm. Its function is as follows. One of the essential components for the initiation of protein synthesis. Stabilizes the binding of IF-2 and IF-3 on the 30S subunit to which N-formylmethionyl-tRNA(fMet) subsequently binds. Helps modulate mRNA selection, yielding the 30S pre-initiation complex (PIC). Upon addition of the 50S ribosomal subunit IF-1, IF-2 and IF-3 are released leaving the mature 70S translation initiation complex. The protein is Translation initiation factor IF-1 of Xanthomonas campestris pv. campestris (strain B100).